A 613-amino-acid chain; its full sequence is Transcription factor cbf11 (613 aa).

The segment at 32–58 (NNGLHNQEDGAGGRNENSERVGSGSPG) is disordered.

This sequence belongs to the Su(H) family.

Its subcellular location is the cytoplasm. The protein localises to the nucleus. Functionally, transcription factor that behaves as a negative regulator of adhesion. Recognizes specifically the canonical CSL response element GTGA/GGAA. May also play a cbf12-antagonistic role in the regulation of a number of other important processes such as extracellular material production, colony morphogenesis, ploidy maintenance, or meiosis. This is Transcription factor cbf11 (cbf11) from Schizosaccharomyces pombe (strain 972 / ATCC 24843) (Fission yeast).